Reading from the N-terminus, the 252-residue chain is Imidazole glycerol phosphate synthase subunit HisF (252 aa).

Catalysis depends on residues D11 and D130.

Belongs to the HisA/HisF family. As to quaternary structure, heterodimer of HisH and HisF.

It localises to the cytoplasm. The enzyme catalyses 5-[(5-phospho-1-deoxy-D-ribulos-1-ylimino)methylamino]-1-(5-phospho-beta-D-ribosyl)imidazole-4-carboxamide + L-glutamine = D-erythro-1-(imidazol-4-yl)glycerol 3-phosphate + 5-amino-1-(5-phospho-beta-D-ribosyl)imidazole-4-carboxamide + L-glutamate + H(+). It participates in amino-acid biosynthesis; L-histidine biosynthesis; L-histidine from 5-phospho-alpha-D-ribose 1-diphosphate: step 5/9. Functionally, IGPS catalyzes the conversion of PRFAR and glutamine to IGP, AICAR and glutamate. The HisF subunit catalyzes the cyclization activity that produces IGP and AICAR from PRFAR using the ammonia provided by the HisH subunit. The protein is Imidazole glycerol phosphate synthase subunit HisF of Streptococcus sanguinis (strain SK36).